A 336-amino-acid polypeptide reads, in one-letter code: Mitochondrial fission regulator 2 (336 aa).

A coiled-coil region spans residues 139-166 (QPDALLKISALEEELQRLRAQIATIITA). Positions 296–336 (HRQRDDSFGKENHSAEPSPFSSPDTPRIFQHTRRSQGRIHL) are disordered. Residues 297 to 309 (RQRDDSFGKENHS) show a composition bias toward basic and acidic residues. Over residues 325-336 (QHTRRSQGRIHL) the composition is skewed to basic residues.

Belongs to the MTFR1 family.

Its subcellular location is the mitochondrion. Its function is as follows. May play a role in mitochondrial aerobic respiration. Can also promote mitochondrial fission. This chain is Mitochondrial fission regulator 2 (mtfr2), found in Danio rerio (Zebrafish).